A 292-amino-acid polypeptide reads, in one-letter code: Protein SETSIP (292 aa).

A compositionally biased stretch (low complexity) spans 1–11 (MAPKRQSPLPL). 2 disordered regions span residues 1 to 43 (MAPK…EQQE) and 158 to 292 (LNES…GEDD). Residues 35-78 (KKGEKEQQEAIEHIDEVQNEIDRLNEQDSEEILKVEQKYNKLRQ) are a coiled coil. The span at 237–292 (DMDDEEGGEDDDDDDDDGDEGEEELEDIDEGDEDEGEEDEDDDEGEEGEEDEGEDD) shows a compositional bias: acidic residues.

Belongs to the nucleosome assembly protein (NAP) family. Expressed in endothelial cell (EC) and protein-induced pluripotent stem (PiPS) endothelial cell (EC) (at protein level).

Its subcellular location is the cytoplasm. The protein resides in the nucleus. In terms of biological role, plays a role as a transcriptional activator involved in the early stage of somatic cell reprogramming. Promotes the differentiation of protein-induced pluripotent stem (PiPS) cells into endothelial cells and the formation of vascular-like tubes (in vitro). Involved in the transcription induction of vascular endothelial-cadherin (VE-cadherin) expression. Associates to the VE-cadherin gene promoter. The chain is Protein SETSIP (SETSIP) from Homo sapiens (Human).